A 166-amino-acid polypeptide reads, in one-letter code: MFPMVTEFMNYGQQTIRAARYIGQGFMITLSHANRLPVTIQYPYEKLITSERFRGRIHFEFDKCIACEVCVRVCPIDLPVVDWKLETDIRKKRLLNYSIDFGICIFCGHCVEYCPTNCLSMTEEYELSTYDRHELNYNQIALGRLPMSIIDDYTIRTILNLPEIKT.

2 4Fe-4S ferredoxin-type domains span residues 55–84 (GRIH…VDWK) and 95–124 (LNYS…MTEE). [4Fe-4S] cluster contacts are provided by C64, C67, C70, C74, C104, C107, C110, and C114.

Belongs to the complex I 23 kDa subunit family. NDH is composed of at least 16 different subunits, 5 of which are encoded in the nucleus. Requires [4Fe-4S] cluster as cofactor.

It is found in the plastid. It localises to the chloroplast thylakoid membrane. The catalysed reaction is a plastoquinone + NADH + (n+1) H(+)(in) = a plastoquinol + NAD(+) + n H(+)(out). It carries out the reaction a plastoquinone + NADPH + (n+1) H(+)(in) = a plastoquinol + NADP(+) + n H(+)(out). In terms of biological role, NDH shuttles electrons from NAD(P)H:plastoquinone, via FMN and iron-sulfur (Fe-S) centers, to quinones in the photosynthetic chain and possibly in a chloroplast respiratory chain. The immediate electron acceptor for the enzyme in this species is believed to be plastoquinone. Couples the redox reaction to proton translocation, and thus conserves the redox energy in a proton gradient. This is NAD(P)H-quinone oxidoreductase subunit I, chloroplastic from Perymeniopsis ovalifolia.